The primary structure comprises 188 residues: UPF0398 protein BBR47_29830 (188 aa).

This sequence belongs to the UPF0398 family.

This chain is UPF0398 protein BBR47_29830, found in Brevibacillus brevis (strain 47 / JCM 6285 / NBRC 100599).